A 210-amino-acid polypeptide reads, in one-letter code: Thymidylate kinase (210 aa).

Residue 10-17 coordinates ATP; the sequence is GPEGAGKS.

Belongs to the thymidylate kinase family.

The enzyme catalyses dTMP + ATP = dTDP + ADP. Functionally, phosphorylation of dTMP to form dTDP in both de novo and salvage pathways of dTTP synthesis. The sequence is that of Thymidylate kinase from Pseudomonas syringae pv. tomato (strain ATCC BAA-871 / DC3000).